The following is a 351-amino-acid chain: MVLSIRSQIIIGVVSSILLTSTILAIAYILMWFNGHMTLTLTLTTIITSCLTLLICSIFINPLIQKIKQFNIKTKQFANGNYASNDKTFNSPKEIYELNQSFNKMASEITQQMNQIKSEQQEKTELIQNLAHDLKTPLASIISYSEGLRDGIITKDHEIKESYDILIKQANRLSTLFDDMTHIITLNTGKTYPPELIQLDQLLVSILQPYEQRIKHENRTLEVNFCNEIDAFYQYRTPLERILTNLLDNALKFSNVGSRIDINISENEDQDTIDIAISDEGIGIIPELQERIFERTFRVENSRNTKTGGSGLGLYIANELAQQNNAKISVSSDIDVGTTMTVTLHKLDITS.

The next 2 membrane-spanning stretches (helical) occupy residues 9 to 29 (IIIG…IAYI) and 40 to 60 (TLTL…SIFI). In terms of domain architecture, HAMP spans 61–114 (NPLIQKIKQFNIKTKQFANGNYASNDKTFNSPKEIYELNQSFNKMASEITQQMN). A Histidine kinase domain is found at 129–348 (NLAHDLKTPL…TMTVTLHKLD (220 aa)). H132 is modified (phosphohistidine; by autocatalysis).

In terms of processing, autophosphorylated.

The protein resides in the cell membrane. The enzyme catalyses ATP + protein L-histidine = ADP + protein N-phospho-L-histidine.. In terms of biological role, member of the two-component regulatory system SaeR/SaeS involved in the regulation of staphylococcal virulence factors in a strain-dependent fashion. Probably functions as a membrane-associated protein kinase that upon sensing the appropriate signal, autophosphorylates and in turn activates the cytosolic response regulator SaeR. This Staphylococcus aureus (strain USA300) protein is Histidine protein kinase SaeS (saeS).